Reading from the N-terminus, the 410-residue chain is Regulator of microtubule dynamics protein 2 (410 aa).

The chain crosses the membrane as a helical span at residues 9 to 28 (LILGIMAGTAGISLLAFWYH). Residue serine 51 is modified to Phosphoserine. Residues 69–110 (QRRQLQILEKLNELLTNMEELKEEIRFLKETIPKLEECIQDE) are a coiled coil. The tract at residues 120–151 (ISPQHRARKKKGTTVQRSATSNSSEEAESEGG) is disordered. A Phosphoserine modification is found at serine 121. Residues 121–131 (SPQHRARKKKG) show a composition bias toward basic residues. Position 139 is a phosphothreonine (threonine 139). Tyrosine 152 carries the phosphotyrosine modification. 2 positions are modified to phosphothreonine: threonine 154 and threonine 157.

This sequence belongs to the RMDN family. Interacts with microtubules.

The protein localises to the membrane. Its subcellular location is the cytoplasm. It is found in the cytoskeleton. The protein resides in the spindle. It localises to the spindle pole. This Mus musculus (Mouse) protein is Regulator of microtubule dynamics protein 2 (Rmdn2).